Consider the following 466-residue polypeptide: Ribosome biogenesis protein YTM1 (466 aa).

The tract at residues 11–99 (IKIKFFTNEE…EAFLTLEYTR (89 aa)) is ubiquitin-like (UBL) domain. Positions 109-466 (SFNNDDWISS…QINKGSDIAK (358 aa)) are sufficient for interaction with ERB1 and association with 66S pre-ribosomes. WD repeat units lie at residues 124-163 (PTTK…EKQY), 165-203 (GHSA…IIDE), 219-258 (GHKA…MTSI), 296-336 (GHSE…CVDT), 338-377 (TTGY…TSDQ), 384-424 (GHTN…SLYT), and 431-466 (STNA…DIAK).

This sequence belongs to the WD repeat WDR12/YTM1 family. In terms of assembly, component of the NOP7 complex, composed of ERB1, NOP7 and YTM1. The complex is held together by ERB1, which interacts with NOP7 via its N-terminal domain and with YTM1 via a high-affinity interaction between the seven-bladed beta-propeller domains of the 2 proteins. The NOP7 complex associates with the 66S pre-ribosome. Interacts (via UBL domain) with MDN1 (via VWFA/MIDAS domain).

The protein resides in the nucleus. Its subcellular location is the nucleolus. It localises to the nucleoplasm. Its function is as follows. Component of the NOP7 complex, which is required for maturation of the 25S and 5.8S ribosomal RNAs and formation of the 60S ribosome. This is Ribosome biogenesis protein YTM1 from Candida albicans (strain SC5314 / ATCC MYA-2876) (Yeast).